Reading from the N-terminus, the 473-residue chain is Photosystem II CP43 reaction center protein (473 aa).

Positions 1–14 (MKTLYSLRRFYPVE) are excised as a propeptide. N-acetylthreonine is present on Thr-15. Thr-15 carries the post-translational modification Phosphothreonine. The next 5 membrane-spanning stretches (helical) occupy residues 69-93 (LFEV…PHLA), 134-155 (LLGP…KDRN), 178-200 (KALY…RKIT), 255-275 (KPFA…LSYS), and 291-312 (WFNN…ASQA). Glu-367 contributes to the [CaMn4O5] cluster binding site. A helical transmembrane segment spans residues 447 to 471 (RARAAAAGFEKGIDRDFEPVLSMTP).

The protein belongs to the PsbB/PsbC family. PsbC subfamily. PSII is composed of 1 copy each of membrane proteins PsbA, PsbB, PsbC, PsbD, PsbE, PsbF, PsbH, PsbI, PsbJ, PsbK, PsbL, PsbM, PsbT, PsbX, PsbY, PsbZ, Psb30/Ycf12, at least 3 peripheral proteins of the oxygen-evolving complex and a large number of cofactors. It forms dimeric complexes. The cofactor is Binds multiple chlorophylls and provides some of the ligands for the Ca-4Mn-5O cluster of the oxygen-evolving complex. It may also provide a ligand for a Cl- that is required for oxygen evolution. PSII binds additional chlorophylls, carotenoids and specific lipids..

The protein localises to the plastid. Its subcellular location is the chloroplast thylakoid membrane. Its function is as follows. One of the components of the core complex of photosystem II (PSII). It binds chlorophyll and helps catalyze the primary light-induced photochemical processes of PSII. PSII is a light-driven water:plastoquinone oxidoreductase, using light energy to abstract electrons from H(2)O, generating O(2) and a proton gradient subsequently used for ATP formation. This Eucalyptus globulus subsp. globulus (Tasmanian blue gum) protein is Photosystem II CP43 reaction center protein.